The chain runs to 358 residues: F-box protein At4g35733 (358 aa).

The F-box domain maps to 4–51 (ATVWSDLPGELLDHIANGLFSKVELLRFRSICKTFRSAVDSDKNFLDH).

As to quaternary structure, part of a SCF (ASK-cullin-F-box) protein ligase complex.

Its pathway is protein modification; protein ubiquitination. Component of SCF(ASK-cullin-F-box) E3 ubiquitin ligase complexes, which may mediate the ubiquitination and subsequent proteasomal degradation of target proteins. The protein is F-box protein At4g35733 of Arabidopsis thaliana (Mouse-ear cress).